Consider the following 188-residue polypeptide: Segregation and condensation protein B (188 aa).

The protein belongs to the ScpB family. Homodimer. Homodimerization may be required to stabilize the binding of ScpA to the Smc head domains. Component of a cohesin-like complex composed of ScpA, ScpB and the Smc homodimer, in which ScpA and ScpB bind to the head domain of Smc. The presence of the three proteins is required for the association of the complex with DNA.

The protein resides in the cytoplasm. Functionally, participates in chromosomal partition during cell division. May act via the formation of a condensin-like complex containing Smc and ScpA that pull DNA away from mid-cell into both cell halves. The chain is Segregation and condensation protein B from Lactococcus lactis subsp. cremoris (strain MG1363).